Consider the following 377-residue polypeptide: 8-amino-7-oxononanoate synthase (377 aa).

Residue Arg-13 participates in substrate binding. 100 to 101 (GY) lines the pyridoxal 5'-phosphate pocket. His-125 contributes to the substrate binding site. Pyridoxal 5'-phosphate-binding residues include Ser-171, His-199, and Thr-228. Lys-231 carries the post-translational modification N6-(pyridoxal phosphate)lysine. Thr-345 serves as a coordination point for substrate.

It belongs to the class-II pyridoxal-phosphate-dependent aminotransferase family. BioF subfamily. In terms of assembly, homodimer. Pyridoxal 5'-phosphate serves as cofactor.

It carries out the reaction 6-carboxyhexanoyl-[ACP] + L-alanine + H(+) = (8S)-8-amino-7-oxononanoate + holo-[ACP] + CO2. It participates in cofactor biosynthesis; biotin biosynthesis. Catalyzes the decarboxylative condensation of pimeloyl-[acyl-carrier protein] and L-alanine to produce 8-amino-7-oxononanoate (AON), [acyl-carrier protein], and carbon dioxide. The chain is 8-amino-7-oxononanoate synthase from Nitrosococcus oceani (strain ATCC 19707 / BCRC 17464 / JCM 30415 / NCIMB 11848 / C-107).